Consider the following 575-residue polypeptide: MPPGKVLQPVLKMKVDELFLYWLSEASTQRMLQDCLRRIKAPGRDQPTPGDGEQPGAWPTAPLAAPRPSGLEPPGTPGPGPALPLGAASSPRNAPHVRGTRRSAGTRVVQTRKEEPLPPATSQSIPTFYFPRGRPQDSVNVDAVISKIESTFARFPHERATMDDMGLVAKACGCPLYWKGPLFYGAGGERTGSVSVHKFVAMWRKILQNCHDDAAKFVHLLMSPGCNYLVQEDFVPFLQDVVNTHPGLSFLKEASEFHSRYITTVIQRIFYAVNRSWSGRITCAELRRSSFLQNVALLEEEADINQLTEFFSYEHFYVIYCKFWELDTDHDLLIDADDLARHNDHALSTKMIDRIFSGAVTRGRKVQKEGKISYADFVWFLISEEDKKTPTSIEYWFRCMDLDGDGALSMFELEYFYEEQCRRLDSMAIEALPFQDCLCQMLDLVKPRTEGKITLQDLKRCKLANVFFDTFFNIEKYLDHEQKEQISLLRDGDSGGPELSDWEKYAAEEYDILVAEETAGEPWEDGFEAELSPVEQKLSALRSPLAQRPFFEAPSPLGAVDLYEYACGDEDLEPL.

The disordered stretch occupies residues 41 to 131; it reads APGRDQPTPG…SQSIPTFYFP (91 aa). The 36-residue stretch at 388-423 folds into the EF-hand domain; sequence KTPTSIEYWFRCMDLDGDGALSMFELEYFYEEQCRR. Ca(2+) is bound by residues D401, D403, D405, and E412.

In terms of assembly, PP2A consists of a common heterodimeric core enzyme, composed of a 36 kDa catalytic subunit (subunit C) and a 65 kDa constant regulatory subunit (PR65 or subunit A), that associates with a variety of regulatory subunits. Proteins that associate with the core dimer include three families of regulatory subunits B (the R2/B/PR55/B55, R3/B''/PR72/PR130/PR59 and R5/B'/B56 families), the 48 kDa variable regulatory subunit, viral proteins, and cell signaling molecules. Interacts with N-terminal region of CDC6. Interacts with NOD2.

The protein localises to the nucleus. In terms of biological role, the B regulatory subunit might modulate substrate selectivity and catalytic activity, and might also direct the localization of the catalytic enzyme to a particular subcellular compartment. The chain is Serine/threonine-protein phosphatase 2A regulatory subunit B'' subunit beta (PPP2R3B) from Homo sapiens (Human).